A 321-amino-acid polypeptide reads, in one-letter code: Sphingolipid delta(4)-desaturase DES1 (321 aa).

6 helical membrane passes run 41 to 61 (PNFKWVAGAMVLTQILALFVV), 68 to 88 (WLIVAAYCFGGIINHSLMLAV), 107 to 127 (ILGFICNLPIGLPMSISFKKY), 157 to 177 (FGKFLWVCLQPFFYIFRPLII), 187 to 206 (IINTVVQLTFNALIVYFLGW), and 208 to 230 (PLAYLLIGSILAMGLHPVAGHFI).

It belongs to the fatty acid desaturase type 1 family. DEGS subfamily. In terms of tissue distribution, testes.

The protein resides in the endoplasmic reticulum membrane. Its subcellular location is the membrane. It localises to the mitochondrion. It catalyses the reaction an N-acylsphinganine + 2 Fe(II)-[cytochrome b5] + O2 + 2 H(+) = an N-acylsphing-4-enine + 2 Fe(III)-[cytochrome b5] + 2 H2O. The catalysed reaction is an N-acyleicosasphinganine + 2 Fe(II)-[cytochrome b5] + O2 + 2 H(+) = an N-acyleicosasphing-4-enine + 2 Fe(III)-[cytochrome b5] + 2 H2O. The protein operates within sphingolipid metabolism. Has sphingolipid-delta-4-desaturase activity. Converts sphinganine-containing sphingolipids (such as N-acylsphinganines or dihydroceramides) into sphingolipids containing the delta-4-desaturated sphingoid base (E)-sphing-4-enine (such as N-acylsphing-4-enines or ceramides), which are required for many different functions (structural functions as well as signaling). Required to initiate spermatid differentiation among other signals. Required for central spindle assembly and cytokinesis during male meiosis, may act as part of an anchoring mechanism that links membrane-bounded cellular compartments to components of the cytoskeleton. The sequence is that of Sphingolipid delta(4)-desaturase DES1 from Drosophila melanogaster (Fruit fly).